A 95-amino-acid polypeptide reads, in one-letter code: Cytochrome b (95 aa).

Transmembrane regions (helical) follow at residues 1 to 16, 40 to 61, and 76 to 95; these read GLCL…FLAM, WLIR…YLHI, and WNIG…VGYV. Residues His-46 and His-60 each contribute to the heme b site.

It belongs to the cytochrome b family. As to quaternary structure, the cytochrome bc1 complex contains 3 respiratory subunits (MT-CYB, CYC1 and UQCRFS1), 2 core proteins (UQCRC1 and UQCRC2) and probably 6 low-molecular weight proteins. Heme b serves as cofactor.

Its subcellular location is the mitochondrion inner membrane. Its function is as follows. Component of the ubiquinol-cytochrome c reductase complex (complex III or cytochrome b-c1 complex) that is part of the mitochondrial respiratory chain. The b-c1 complex mediates electron transfer from ubiquinol to cytochrome c. Contributes to the generation of a proton gradient across the mitochondrial membrane that is then used for ATP synthesis. The chain is Cytochrome b (mt-cyb) from Gomphosus varius (Bird wrasse).